Reading from the N-terminus, the 118-residue chain is Small ribosomal subunit protein uS13 (118 aa).

Positions 94–118 (GLPLRGQRTRTNARTRKGPRKAIRK) are disordered.

The protein belongs to the universal ribosomal protein uS13 family. As to quaternary structure, part of the 30S ribosomal subunit. Forms a loose heterodimer with protein S19. Forms two bridges to the 50S subunit in the 70S ribosome.

Located at the top of the head of the 30S subunit, it contacts several helices of the 16S rRNA. In the 70S ribosome it contacts the 23S rRNA (bridge B1a) and protein L5 of the 50S subunit (bridge B1b), connecting the 2 subunits; these bridges are implicated in subunit movement. Contacts the tRNAs in the A and P-sites. This Stenotrophomonas maltophilia (strain R551-3) protein is Small ribosomal subunit protein uS13.